Reading from the N-terminus, the 479-residue chain is Membrane-bound lytic murein transglycosylase F (479 aa).

Residues 1-18 form the signal peptide; that stretch reads MKGLFIRIVLAICLSLWA. The segment at 19–266 is non-LT domain; it reads IDMVFPWQQI…RIEEKYFNHL (248 aa). The tract at residues 267-479 is LT domain; the sequence is NQFDYVDTRS…ISTQTQQEQR (213 aa). Glu311 is an active-site residue.

The protein in the N-terminal section; belongs to the bacterial solute-binding protein 3 family. This sequence in the C-terminal section; belongs to the transglycosylase Slt family.

It localises to the cell outer membrane. It catalyses the reaction Exolytic cleavage of the (1-&gt;4)-beta-glycosidic linkage between N-acetylmuramic acid (MurNAc) and N-acetylglucosamine (GlcNAc) residues in peptidoglycan, from either the reducing or the non-reducing ends of the peptidoglycan chains, with concomitant formation of a 1,6-anhydrobond in the MurNAc residue.. In terms of biological role, murein-degrading enzyme that degrades murein glycan strands and insoluble, high-molecular weight murein sacculi, with the concomitant formation of a 1,6-anhydromuramoyl product. Lytic transglycosylases (LTs) play an integral role in the metabolism of the peptidoglycan (PG) sacculus. Their lytic action creates space within the PG sacculus to allow for its expansion as well as for the insertion of various structures such as secretion systems and flagella. The protein is Membrane-bound lytic murein transglycosylase F of Histophilus somni (strain 2336) (Haemophilus somnus).